Reading from the N-terminus, the 968-residue chain is uncharacterized protein (968 aa).

Disordered regions lie at residues 124–177 (SSIS…FSFP), 348–437 (QEDS…VNDS), 572–595 (TTTTTITQQQQQQQQQQQQQQQNT), 608–627 (PKASNKLANNSNGKKVGSSK), and 837–877 (KASK…KKGK). Polar residues predominate over residues 131–157 (TIESNYLSNPSSPCQSTPILESSTPFS). Low complexity-rich tracts occupy residues 158-177 (QKLMSNEQQQQQQPQNFSFP), 352-431 (NNNN…NCNN), and 572-593 (TTTTTITQQQQQQQQQQQQQQQ). The segment covering 841–857 (DSSSSPTASSAAPGDSS) has biased composition (low complexity).

This is an uncharacterized protein from Dictyostelium discoideum (Social amoeba).